The chain runs to 364 residues: Sulfate/thiosulfate import ATP-binding protein CysA (364 aa).

The region spanning 3–237 (IEIARIKKSF…PATRFVLEFM (235 aa)) is the ABC transporter domain. 35–42 (GPSGSGKT) is a binding site for ATP.

The protein belongs to the ABC transporter superfamily. Sulfate/tungstate importer (TC 3.A.1.6) family. As to quaternary structure, the complex is composed of two ATP-binding proteins (CysA), two transmembrane proteins (CysT and CysW) and a solute-binding protein (CysP).

It localises to the cell inner membrane. The catalysed reaction is sulfate(out) + ATP + H2O = sulfate(in) + ADP + phosphate + H(+). It catalyses the reaction thiosulfate(out) + ATP + H2O = thiosulfate(in) + ADP + phosphate + H(+). Functionally, part of the ABC transporter complex CysAWTP involved in sulfate/thiosulfate import. Responsible for energy coupling to the transport system. This chain is Sulfate/thiosulfate import ATP-binding protein CysA, found in Salmonella typhi.